The chain runs to 913 residues: Chitin synthase 1 (913 aa).

The tract at residues 1 to 27 (MSGAPPPSSGFAPRSYGQQPLSHAPRS) is disordered. UDP-N-acetyl-alpha-D-glucosamine-binding residues include Thr237, Glu241, and Asp291. Asn420 carries an N-linked (GlcNAc...) asparagine glycan. The active site involves Asp496. Asn510 carries N-linked (GlcNAc...) asparagine glycosylation. The next 6 helical transmembrane spans lie at 539-559 (WLNG…RIYS), 581-601 (YTAF…FIVF), 625-645 (AVYI…IIGL), 658-678 (FVGA…AGIF), 684-704 (TVHS…ASAL), and 711-731 (IFMT…IFTI). Positions 741–743 (SWG) match the Conserved SWG motif motif. Transmembrane regions (helical) follow at residues 800 to 820 (VLLT…YFAS) and 825 to 845 (MPVL…GSIG). N-linked (GlcNAc...) asparagine glycosylation is found at Asn867 and Asn900.

Belongs to the chitin synthase family. Class II subfamily. In terms of assembly, homodimer. Mn(2+) is required as a cofactor.

It is found in the cell membrane. It catalyses the reaction [(1-&gt;4)-N-acetyl-beta-D-glucosaminyl](n) + UDP-N-acetyl-alpha-D-glucosamine = [(1-&gt;4)-N-acetyl-beta-D-glucosaminyl](n+1) + UDP + H(+). Its activity is regulated as follows. The activity is inhibited by nikkomycin Z (NikZ). Functionally, polymerizes chitin, a structural polymer of the cell wall and septum, by transferring the sugar moiety of UDP-GlcNAc to the non-reducing end of the growing chitin polymer. Involved in mycelial growth, sporangial production, zoospore release and pathogenesis. In Phytophthora sojae (strain P6497) (Soybean stem and root rot agent), this protein is Chitin synthase 1.